A 247-amino-acid polypeptide reads, in one-letter code: Probable transcriptional regulatory protein YPO2055/y2255/YP_1898 (247 aa).

The protein belongs to the TACO1 family.

The protein localises to the cytoplasm. The polypeptide is Probable transcriptional regulatory protein YPO2055/y2255/YP_1898 (Yersinia pestis).